The sequence spans 716 residues: MALTAALKAQIAAWYKALQEQIPDFIPRAPQRQMIADVAKTLAGEEGRHLAIEAPTGVGKTLSYLIPGIAIAREEQKTLVVSTANVALQDQIYSKDLPLLKKIIPDLKFTAAFGRGRYVCPRNLTALASTEPTQQDLLAFLDDELTPNNQEEQKRCAKLKGDLDTYKWDGLRDHTDIAIDDDLWRRLSTDKASCLNRNCYYYRECPFFVARREIQEAEVVVANHALVMAAMESEAVLPDPKNLLLVLDEGHHLPDVARDALEMSAEITAPWYRLQLDLFTKLVATCMEQFRPKTIPPLAIPERLNAHCEELYELIASLNNILNLYMPAGQEAEHRFAMGELPDEVLEICQRLAKLTEMLRGLAELFLNDLSEKTGSHDIVRLHRLILQMNRALGMFEAQSKLWRLASLAQSSGAPVTKWATREEREGQLHLWFHCVGIRVSDQLERLLWRSIPHIIVTSATLRSLNSFSRLQEMSGLKEKAGDRFVALDSPFNHCEQGKIVIPRMRVEPSIDNEEQHIAEMAAFFREQVESKKHLGMLVLFASGRAMQRFLDYVTDLRLMLLVQGDQPRYRLVELHRKRVANGERSVLVGLQSFAEGLDLKGDMLSQVHIHKIAFPPIDSPVVITEGEWLKSLNRYPFEVQSLPSASFNLIQQVGRLIRSHGCWGEVVIYDKRLLTKNYGKRLLDALPVFPIEQPEVPEGIVKKKEKTKSPRRRRR.

The Helicase ATP-binding domain occupies 17-294; that stretch reads ALQEQIPDFI…TCMEQFRPKT (278 aa). Position 54-61 (54-61) interacts with ATP; it reads APTGVGKT. Cys120 is a [4Fe-4S] cluster binding site. The DEAH box signature appears at 131 to 134; that stretch reads EPTQ. Cys194, Cys199, and Cys205 together coordinate [4Fe-4S] cluster. The DEAH box signature appears at 248-251; the sequence is DEGH. A Helicase C-terminal domain is found at 517-698; that stretch reads HIAEMAAFFR…VFPIEQPEVP (182 aa).

Belongs to the helicase family. DinG subfamily. Type 1 sub-subfamily. It depends on [4Fe-4S] cluster as a cofactor.

It catalyses the reaction Couples ATP hydrolysis with the unwinding of duplex DNA at the replication fork by translocating in the 5'-3' direction. This creates two antiparallel DNA single strands (ssDNA). The leading ssDNA polymer is the template for DNA polymerase III holoenzyme which synthesizes a continuous strand.. It carries out the reaction ATP + H2O = ADP + phosphate + H(+). Functionally, DNA-dependent ATPase and 5'-3' DNA helicase. Unwinds D-loops, R-loops, forked DNA and G-quadruplex DNA. This Escherichia coli O157:H7 protein is ATP-dependent DNA helicase DinG.